Here is a 455-residue protein sequence, read N- to C-terminus: Argininosuccinate lyase (455 aa).

Belongs to the lyase 1 family. Argininosuccinate lyase subfamily.

It localises to the cytoplasm. The enzyme catalyses 2-(N(omega)-L-arginino)succinate = fumarate + L-arginine. It functions in the pathway amino-acid biosynthesis; L-arginine biosynthesis; L-arginine from L-ornithine and carbamoyl phosphate: step 3/3. This chain is Argininosuccinate lyase, found in Shewanella oneidensis (strain ATCC 700550 / JCM 31522 / CIP 106686 / LMG 19005 / NCIMB 14063 / MR-1).